The sequence spans 462 residues: Argininosuccinate lyase (462 aa).

It belongs to the lyase 1 family. Argininosuccinate lyase subfamily.

It localises to the cytoplasm. It catalyses the reaction 2-(N(omega)-L-arginino)succinate = fumarate + L-arginine. The protein operates within amino-acid biosynthesis; L-arginine biosynthesis; L-arginine from L-ornithine and carbamoyl phosphate: step 3/3. The protein is Argininosuccinate lyase of Pelagibacter ubique (strain HTCC1062).